Reading from the N-terminus, the 376-residue chain is Probable ribonucleoside-diphosphate reductase small subunit 048L (376 aa).

Positions 110, 140, and 143 each coordinate Fe cation. The active site involves Tyr147. Glu217, Glu251, and His254 together coordinate Fe cation.

Belongs to the ribonucleoside diphosphate reductase small chain family. As to quaternary structure, heterotetramer composed of a homodimer of the large subunit (R1) and a homodimer of the small subunit (R2). Larger multisubunit protein complex are also active, composed of (R1)n(R2)n. Fe cation is required as a cofactor.

It carries out the reaction a 2'-deoxyribonucleoside 5'-diphosphate + [thioredoxin]-disulfide + H2O = a ribonucleoside 5'-diphosphate + [thioredoxin]-dithiol. In terms of biological role, ribonucleoside-diphosphate reductase holoenzyme provides the precursors necessary for viral DNA synthesis. Allows virus growth in non-dividing cells. Catalyzes the biosynthesis of deoxyribonucleotides from the corresponding ribonucleotides. The polypeptide is Probable ribonucleoside-diphosphate reductase small subunit 048L (Invertebrate iridescent virus 3 (IIV-3)).